A 91-amino-acid polypeptide reads, in one-letter code: Potassium channel toxin AaTXK-beta (91 aa).

The signal sequence occupies residues 1–19; the sequence is MQRNLVVLLFLGMVALSSC. A propeptide spanning residues 20–27 is cleaved from the precursor; sequence GLREKHVQ. Residues 54 to 91 enclose the BetaSPN-type CS-alpha/beta domain; sequence QFGCPAYQGYCDDHCQDIKKEEGFCHGFKCKCGIPMGF. Disulfide bonds link cysteine 57-cysteine 78, cysteine 64-cysteine 83, and cysteine 68-cysteine 85.

This sequence belongs to the long chain scorpion toxin family. Class 1 subfamily. In terms of assembly, monomer (both chains). Expressed by the venom gland.

It localises to the secreted. Its function is as follows. Inhibits voltage-gated potassium channels (Kv). Does not activate Kv7 channels. In terms of biological role, peptide activator of Kv7.4/KCNQ4 channels. Also acts as a subtype-selective activator of channels formed by Kv7.3/KCNQ3, Kv7.2/Kv7.3 (KCNQ2/KCNQ3), Kv7.5/Kv7.3 (KCNQ3/KCNQ5) subunits. The protein is Potassium channel toxin AaTXK-beta of Androctonus australis (Sahara scorpion).